The chain runs to 205 residues: uncharacterized protein (205 aa).

5 helical membrane passes run 5–25, 41–61, 68–88, 117–137, and 147–167; these read VWLAYLLTAVVFSLAPGSGTV, GAIIGLQIGLACHIVLVGIGI, SALAFTLIKWIGAAYLVWLGI, LINLTNPKSIVFLVALFPQFI, and FLVLGITTVTIDAIVMFGYTA.

The protein belongs to the Rht family.

It localises to the cell inner membrane. Its function is as follows. Involved in positive regulation of motility and negative regulation of biofilm formation. This is an uncharacterized protein from Vibrio cholerae serotype O1 (strain ATCC 39315 / El Tor Inaba N16961).